A 231-amino-acid chain; its full sequence is Orotidine 5'-phosphate decarboxylase (231 aa).

Substrate-binding positions include D11, K33, 60 to 69 (DLKFHDIPNT), T120, R181, Q190, G210, and R211. The active-site Proton donor is the K62.

It belongs to the OMP decarboxylase family. Type 1 subfamily. In terms of assembly, homodimer.

It carries out the reaction orotidine 5'-phosphate + H(+) = UMP + CO2. The protein operates within pyrimidine metabolism; UMP biosynthesis via de novo pathway; UMP from orotate: step 2/2. Functionally, catalyzes the decarboxylation of orotidine 5'-monophosphate (OMP) to uridine 5'-monophosphate (UMP). This is Orotidine 5'-phosphate decarboxylase from Pseudoalteromonas atlantica (strain T6c / ATCC BAA-1087).